The chain runs to 388 residues: Flap endonuclease 1 (388 aa).

The N-domain stretch occupies residues Met1–Arg104. Asp34 provides a ligand contact to Mg(2+). DNA-binding residues include Arg47 and Arg70. Residues Asp86, Glu158, Glu160, Asp179, and Asp181 each coordinate Mg(2+). The segment at Glu122–Tyr253 is I-domain. A DNA-binding site is contributed by Glu158. Residues Gly231 and Asp233 each contribute to the DNA site. Mg(2+) is bound at residue Asp233. An interaction with PCNA region spans residues Thr336–Phe344. The disordered stretch occupies residues Ala355–Lys388.

This sequence belongs to the XPG/RAD2 endonuclease family. FEN1 subfamily. In terms of assembly, interacts with PCNA. Three molecules of FEN1 bind to one PCNA trimer with each molecule binding to one PCNA monomer. PCNA stimulates the nuclease activity without altering cleavage specificity. Mg(2+) serves as cofactor. In terms of processing, phosphorylated. Phosphorylation upon DNA damage induces relocalization to the nuclear plasma.

It is found in the nucleus. It localises to the nucleolus. The protein resides in the nucleoplasm. The protein localises to the mitochondrion. In terms of biological role, structure-specific nuclease with 5'-flap endonuclease and 5'-3' exonuclease activities involved in DNA replication and repair. During DNA replication, cleaves the 5'-overhanging flap structure that is generated by displacement synthesis when DNA polymerase encounters the 5'-end of a downstream Okazaki fragment. It enters the flap from the 5'-end and then tracks to cleave the flap base, leaving a nick for ligation. Also involved in the long patch base excision repair (LP-BER) pathway, by cleaving within the apurinic/apyrimidinic (AP) site-terminated flap. Acts as a genome stabilization factor that prevents flaps from equilibrating into structures that lead to duplications and deletions. Also possesses 5'-3' exonuclease activity on nicked or gapped double-stranded DNA, and exhibits RNase H activity. Also involved in replication and repair of rDNA and in repairing mitochondrial DNA. In Drosophila willistoni (Fruit fly), this protein is Flap endonuclease 1.